The chain runs to 426 residues: Diaminobutyrate--2-oxoglutarate transaminase (426 aa).

Lys-272 is subject to N6-(pyridoxal phosphate)lysine.

The protein belongs to the class-III pyridoxal-phosphate-dependent aminotransferase family. Pyridoxal 5'-phosphate is required as a cofactor.

The enzyme catalyses L-2,4-diaminobutanoate + 2-oxoglutarate = L-aspartate 4-semialdehyde + L-glutamate. Its pathway is amine and polyamine biosynthesis; ectoine biosynthesis; L-ectoine from L-aspartate 4-semialdehyde: step 1/3. Functionally, catalyzes reversively the conversion of L-aspartate beta-semialdehyde (ASA) to L-2,4-diaminobutyrate (DABA) by transamination with L-glutamate. This Sporosarcina pasteurii (Bacillus pasteurii) protein is Diaminobutyrate--2-oxoglutarate transaminase (ectB).